Consider the following 122-residue polypeptide: uncharacterized protein (122 aa).

The disordered stretch occupies residues 97–122; the sequence is TSRNGFSNPNKDGKKNDDDNNSSSKS.

This is an uncharacterized protein from Mycoplasma genitalium (strain ATCC 33530 / DSM 19775 / NCTC 10195 / G37) (Mycoplasmoides genitalium).